We begin with the raw amino-acid sequence, 447 residues long: MDINKINETIQMISEEHFDIRTVTMGISLLDCIGGDGQRTAEKVHRKIVDKAGKLVETAQQLERDFGVPIVNKRISVTPVSLLAGNADYDGLIKIARALDQAAADVGVDFLGGYSALIQKGSTPTEKMLIDSFPEVLSTTKLLMSSINIASTKAGINLNAVGKTGRTIKRISEVDPLGNAKLVVFANAVEDNPFMAGAFHGVSEDDAVINVGVSGPGVVKRALETVRDRSIDVVAEKIKTTAFKITRIGQLIGGLTAKKLGLPFGIVDLSLAPTPARGDSVAEVLEEIGLEQVGTHGTTAALMLLNDAIKKGGVMASQRVGGLSGAFIPVSEDAGMIDATVAGTLSISKLEAMTSVCSVGLDMIAIPGNTPASTISAMIADEAAIGVQNNKTTAVRVIPVPGKSVGDSIDFGGLLGRAPIMPVIEKSSTAFINRGGHIPAPIHSFKN.

The protein belongs to the UPF0210 family. In terms of assembly, homodimer.

This is UPF0210 protein OEOE_0945 from Oenococcus oeni (strain ATCC BAA-331 / PSU-1).